Reading from the N-terminus, the 397-residue chain is DNA-directed RNA polymerase subunit Rpo1C (397 aa).

The protein belongs to the RNA polymerase beta' chain family. As to quaternary structure, part of the RNA polymerase complex.

Its subcellular location is the cytoplasm. It carries out the reaction RNA(n) + a ribonucleoside 5'-triphosphate = RNA(n+1) + diphosphate. DNA-dependent RNA polymerase (RNAP) catalyzes the transcription of DNA into RNA using the four ribonucleoside triphosphates as substrates. Forms part of the jaw domain. This Pyrococcus abyssi (strain GE5 / Orsay) protein is DNA-directed RNA polymerase subunit Rpo1C.